Here is a 231-residue protein sequence, read N- to C-terminus: Urease accessory protein UreF (231 aa).

It belongs to the UreF family. In terms of assembly, ureD, UreF and UreG form a complex that acts as a GTP-hydrolysis-dependent molecular chaperone, activating the urease apoprotein by helping to assemble the nickel containing metallocenter of UreC. The UreE protein probably delivers the nickel.

It localises to the cytoplasm. Required for maturation of urease via the functional incorporation of the urease nickel metallocenter. The sequence is that of Urease accessory protein UreF from Magnetococcus marinus (strain ATCC BAA-1437 / JCM 17883 / MC-1).